Reading from the N-terminus, the 330-residue chain is Replication factor C small subunit (330 aa).

48-55 (GPPGTGKT) contributes to the ATP binding site.

Belongs to the activator 1 small subunits family. RfcS subfamily. In terms of assembly, heteropentamer composed of four small subunits (RfcS) and one large subunit (RfcL). A homotetramer of this subunit interacts with PCNA heterodimer PCNA1-PCNA2.

Part of the RFC clamp loader complex which loads the PCNA sliding clamp onto DNA. The complex possesses DNA-dependent ATPase activity. The protein is Replication factor C small subunit (rfcS) of Saccharolobus solfataricus (strain ATCC 35092 / DSM 1617 / JCM 11322 / P2) (Sulfolobus solfataricus).